A 435-amino-acid chain; its full sequence is MSIEVDWGAATSGPDGEALAERIRSFIHDKFQQVALPRFIRSVQVHSFDFGTIPPELEIKDLCEPFADFYEEDEDDEASDVSEGLVSRHGSPWHGTHPELNESSFRDDNAINHSLRDPFTEGFQPSALRSPIALSDHLNPHFRSGTPGIPGGTSTLGYHLMSLGGLSGTQTPLAAVAGGSPFAGGWNDSGMMGPGNRGRPPPPIFTAHQSRPEADIDSSNPTSRPSTSSTLPSHPSGSNKNNGDGAGGPDHGSHPEEHGHLDDPTSEEPLRFPRMRERRPEDFQVLCHAKYAGDVRLSLTAEILLDYPMPSFVGLPLKLNVTGITFDGVAVVAYIRKRVHFCFLSSEDADALIGSDQPDVGAQTEYSRSGGDATVSAKRQGGLLQEIRVESEIGRKEDGKQVLKNVGKVERFVLAQVRRIFEEELVYPSFWTFLV.

The SMP-LTD domain occupies 1 to 435 (MSIEVDWGAA…VYPSFWTFLV (435 aa)). Disordered stretches follow at residues 73–113 (DEDD…AINH) and 186–268 (WNDS…TSEE). Over residues 96–113 (THPELNESSFRDDNAINH) the composition is skewed to basic and acidic residues. Residues 218–238 (SSNPTSRPSTSSTLPSHPSGS) are compositionally biased toward low complexity. Residues 251 to 268 (HGSHPEEHGHLDDPTSEE) show a composition bias toward basic and acidic residues.

The protein belongs to the MDM12 family. As to quaternary structure, component of the ER-mitochondria encounter structure (ERMES) or MDM complex, composed of mmm1, mdm10, mdm12 and mdm34. A mmm1 homodimer associates with one molecule of mdm12 on each side in a pairwise head-to-tail manner, and the SMP-LTD domains of mmm1 and mdm12 generate a continuous hydrophobic tunnel for phospholipid trafficking.

Its subcellular location is the mitochondrion outer membrane. It localises to the endoplasmic reticulum membrane. Its function is as follows. Component of the ERMES/MDM complex, which serves as a molecular tether to connect the endoplasmic reticulum (ER) and mitochondria. Components of this complex are involved in the control of mitochondrial shape and protein biogenesis, and function in nonvesicular lipid trafficking between the ER and mitochondria. Mdm12 is required for the interaction of the ER-resident membrane protein mmm1 and the outer mitochondrial membrane-resident beta-barrel protein mdm10. The mdm12-mmm1 subcomplex functions in the major beta-barrel assembly pathway that is responsible for biogenesis of all mitochondrial outer membrane beta-barrel proteins, and acts in a late step after the SAM complex. The mdm10-mdm12-mmm1 subcomplex further acts in the TOM40-specific pathway after the action of the mdm12-mmm1 complex. Essential for establishing and maintaining the structure of mitochondria and maintenance of mtDNA nucleoids. This Aspergillus niger (strain ATCC MYA-4892 / CBS 513.88 / FGSC A1513) protein is Mitochondrial distribution and morphology protein 12.